Here is a 373-residue protein sequence, read N- to C-terminus: Sodium-dependent organic anion transporter (373 aa).

Residues methionine 1–serine 15 show a composition bias toward polar residues. A disordered region spans residues methionine 1 to proline 21. Residues methionine 1 to leucine 32 are Extracellular-facing. Residues asparagine 8 and asparagine 14 are each glycosylated (N-linked (GlcNAc...) asparagine). The chain crosses the membrane as a helical span at residues leucine 33–valine 53. The Cytoplasmic portion of the chain corresponds to glutamate 54–glycine 67. Residues isoleucine 68–isoleucine 88 form a helical membrane-spanning segment. Residues glycine 89 to alanine 97 are Extracellular-facing. A helical transmembrane segment spans residues isoleucine 98–tryptophan 118. The Cytoplasmic segment spans residues valine 119–serine 126. A helical membrane pass occupies residues isoleucine 127–isoleucine 147. The Extracellular segment spans residues tyrosine 148 to asparagine 157. A helical transmembrane segment spans residues leucine 158–serine 178. The Cytoplasmic segment spans residues glycine 179–lysine 195. Residues valine 196–alanine 216 traverse the membrane as a helical segment. Topologically, residues lysine 217–threonine 224 are extracellular. The helical transmembrane segment at leucine 225–phenylalanine 245 threads the bilayer. Topologically, residues leucine 246–asparagine 265 are cytoplasmic. Residues isoleucine 266–valine 283 traverse the membrane as a helical segment. Position 284 (glutamine 284) is a topological domain, extracellular. A helical transmembrane segment spans residues leucine 285–alanine 305. Over alanine 306 to glutamate 373 the chain is Cytoplasmic.

This sequence belongs to the bile acid:sodium symporter (BASS) (TC 2.A.28) family. In terms of processing, glycosylated. Highest expression in lung and testis, moderate expression in heart, bladder and skin, and low expression in blood, liver, stomach, small intestine, spleen, kidney, adrenal gland, seminal vesicle, preputial gland, coagulating gland, lacrimal gland/eye, and brain.

The protein resides in the membrane. It carries out the reaction estrone 3-sulfate(out) + 2 Na(+)(out) = estrone 3-sulfate(in) + 2 Na(+)(in). The catalysed reaction is 17beta-estradiol 3-sulfate(out) + 2 Na(+)(out) = 17beta-estradiol 3-sulfate(in) + 2 Na(+)(in). It catalyses the reaction dehydroepiandrosterone 3-sulfate(out) + 2 Na(+)(out) = dehydroepiandrosterone 3-sulfate(in) + 2 Na(+)(in). The enzyme catalyses androst-5-ene-diol 3-sulfate(out) + 2 Na(+)(out) = androst-5-ene-diol 3-sulfate(in) + 2 Na(+)(in). It carries out the reaction pregnenolone sulfate(out) + 2 Na(+)(out) = pregnenolone sulfate(in) + 2 Na(+)(in). The catalysed reaction is taurolithocholate 3-sulfate(out) + 2 Na(+)(out) = taurolithocholate 3-sulfate(in) + 2 Na(+)(in). It catalyses the reaction androsterone 3alpha-sulfate(out) + 2 Na(+)(out) = androsterone 3alpha-sulfate(in) + 2 Na(+)(in). The enzyme catalyses 5alpha-dihydrotestosterone sulfate(out) + 2 Na(+)(out) = 5alpha-dihydrotestosterone sulfate(in) + 2 Na(+)(in). It carries out the reaction 17beta-estradiol 17-sulfate(out) + 2 Na(+)(out) = 17beta-estradiol 17-sulfate(in) + 2 Na(+)(in). The catalysed reaction is 17alpha-hydroxypregnenolone 3-sulfate(out) + 2 Na(+)(out) = 17alpha-hydroxypregnenolone 3-sulfate(in) + 2 Na(+)(in). It catalyses the reaction epiandrosterone 3-sulfate(out) + 2 Na(+)(out) = epiandrosterone 3-sulfate(in) + 2 Na(+)(in). The enzyme catalyses epitestosterone 17-sulfate(out) + 2 Na(+)(out) = epitestosterone 17-sulfate(in) + 2 Na(+)(in). It carries out the reaction testosterone 17-sulfate(out) + 2 Na(+)(out) = testosterone 17-sulfate(in) + 2 Na(+)(in). The catalysed reaction is 16alpha-hydroxydehydroepiandrosterone 3-sulfate(out) + 2 Na(+)(out) = 16alpha-hydroxydehydroepiandrosterone 3-sulfate(in) + 2 Na(+)(in). Functionally, transports sulfoconjugated steroid hormones from the extracellular compartment into the cytosol in a sodium-dependent manner without hydrolysis. Steroid sulfate hormones are commonly considered to be biologically inactive metabolites, that may be activated by steroid sulfatases into free steroids. May play an important role by delivering sulfoconjugated steroids to specific target cells in reproductive organs. May play a role transporting the estriol precursor 16alpha-hydroxydehydroepiandrosterone 3-sulfate (16a-OH-DHEAS) at the fetal blood vessel endothelium. Can also transport other sulfoconjugated molecules such as taurolithocholic acid-3-sulfate and sulfoconjugated pyrenes. In Mus musculus (Mouse), this protein is Sodium-dependent organic anion transporter (Slc10a6).